The primary structure comprises 242 residues: Sugar fermentation stimulation protein homolog (242 aa).

This sequence belongs to the SfsA family.

In Rippkaea orientalis (strain PCC 8801 / RF-1) (Cyanothece sp. (strain PCC 8801)), this protein is Sugar fermentation stimulation protein homolog.